The following is a 128-amino-acid chain: ATP synthase epsilon chain (128 aa).

It belongs to the ATPase epsilon chain family. As to quaternary structure, F-type ATPases have 2 components, CF(1) - the catalytic core - and CF(0) - the membrane proton channel. CF(1) has five subunits: alpha(3), beta(3), gamma(1), delta(1), epsilon(1). CF(0) has three main subunits: a, b and c.

The protein resides in the cell inner membrane. Functionally, produces ATP from ADP in the presence of a proton gradient across the membrane. The sequence is that of ATP synthase epsilon chain from Sulfurovum sp. (strain NBC37-1).